A 208-amino-acid chain; its full sequence is Uracil phosphoribosyltransferase (208 aa).

5-phospho-alpha-D-ribose 1-diphosphate is bound by residues Arg-78, Arg-103, and 130–138; that span reads DPMLATGGS. Uracil contacts are provided by residues Ile-193 and 198 to 200; that span reads GDA. Asp-199 provides a ligand contact to 5-phospho-alpha-D-ribose 1-diphosphate.

Belongs to the UPRTase family. The cofactor is Mg(2+).

The catalysed reaction is UMP + diphosphate = 5-phospho-alpha-D-ribose 1-diphosphate + uracil. The protein operates within pyrimidine metabolism; UMP biosynthesis via salvage pathway; UMP from uracil: step 1/1. Its activity is regulated as follows. Allosterically activated by GTP. Its function is as follows. Catalyzes the conversion of uracil and 5-phospho-alpha-D-ribose 1-diphosphate (PRPP) to UMP and diphosphate. In Shewanella frigidimarina (strain NCIMB 400), this protein is Uracil phosphoribosyltransferase.